Consider the following 397-residue polypeptide: MAKAKFERSKPHVNIGTIGHVDHGKTTLTAAITTVLAQKGGASATKYDEIDKAPEEKERGITINTSHVEYETANRHYAHVDCPGHADYVKNMITGAAQMDGAILVVSAADGPMPQTREHILLASRVGVQYIVVFLNKADQVDDPELIELVEMEVRELLNEYGFPGDDTPIVVGSALEVLENQDNAEKTKCIDELMEAIDSYIPTPERATDQPFLMPVEDVFTITGRGTVATGRVERGVLHTGDEVELIGMKQEVSKTVCTGIEMFRKILDEAMAGDNIGALLRGIQRDEIQRGQVLAKPGSVTPHKKFVGQVYVLKKEEGGRHTPFFNGYRPQFYFRTTDVTGSINLPEGVEMVMPGDHIDMAVELITPVAMHENLRFAIREGGRTVGSGVVTTISE.

The tr-type G domain maps to 10 to 206 (KPHVNIGTIG…AIDSYIPTPE (197 aa)). The segment at 19–26 (GHVDHGKT) is G1. 19 to 26 (GHVDHGKT) serves as a coordination point for GTP. Thr-26 is a Mg(2+) binding site. The interval 60-64 (GITIN) is G2. The interval 81 to 84 (DCPG) is G3. Residues 81 to 85 (DCPGH) and 136 to 139 (NKAD) each bind GTP. The segment at 136-139 (NKAD) is G4. The G5 stretch occupies residues 174-176 (SAL).

Belongs to the TRAFAC class translation factor GTPase superfamily. Classic translation factor GTPase family. EF-Tu/EF-1A subfamily. Monomer.

Its subcellular location is the cytoplasm. The enzyme catalyses GTP + H2O = GDP + phosphate + H(+). In terms of biological role, GTP hydrolase that promotes the GTP-dependent binding of aminoacyl-tRNA to the A-site of ribosomes during protein biosynthesis. The polypeptide is Elongation factor Tu (Clostridium botulinum (strain ATCC 19397 / Type A)).